The following is a 358-amino-acid chain: Photosystem II protein D1 (358 aa).

A run of 3 helical transmembrane segments spans residues 28–45, 117–132, and 141–155; these read YVGW…AAAI, HFLI…QWEL, and WICV…AAFA. Residue histidine 117 participates in chlorophyll a binding. Position 125 (tryptophan 125) interacts with pheophytin a. [CaMn4O5] cluster contacts are provided by aspartate 169 and glutamate 188. Residues 196–217 form a helical membrane-spanning segment; it reads FHMIGVAGMFGGSLFSAMHGSL. Histidine 197 serves as a coordination point for chlorophyll a. A quinone contacts are provided by residues histidine 214 and 263–264; that span reads SF. Histidine 214 serves as a coordination point for Fe cation. Residue histidine 271 coordinates Fe cation. A helical transmembrane segment spans residues 273–287; the sequence is FLAAWPVICIWITSL. Histidine 331, glutamate 332, aspartate 341, and alanine 343 together coordinate [CaMn4O5] cluster. The propeptide occupies 344–358; it reads AAESTPVALIAPAIG.

Belongs to the reaction center PufL/M/PsbA/D family. As to quaternary structure, PSII is composed of 1 copy each of membrane proteins PsbA, PsbB, PsbC, PsbD, PsbE, PsbF, PsbH, PsbI, PsbJ, PsbK, PsbL, PsbM, PsbT, PsbX, PsbY, Psb30/Ycf12, peripheral proteins PsbO, CyanoQ (PsbQ), PsbU, PsbV and a large number of cofactors. It forms dimeric complexes. It depends on The D1/D2 heterodimer binds P680, chlorophylls that are the primary electron donor of PSII, and subsequent electron acceptors. It shares a non-heme iron and each subunit binds pheophytin, quinone, additional chlorophylls, carotenoids and lipids. D1 provides most of the ligands for the Mn4-Ca-O5 cluster of the oxygen-evolving complex (OEC). There is also a Cl(-1) ion associated with D1 and D2, which is required for oxygen evolution. The PSII complex binds additional chlorophylls, carotenoids and specific lipids. as a cofactor. Tyr-160 forms a radical intermediate that is referred to as redox-active TyrZ, YZ or Y-Z. Post-translationally, C-terminally processed by CtpA; processing is essential to allow assembly of the oxygen-evolving complex and thus photosynthetic growth.

It localises to the cellular thylakoid membrane. The enzyme catalyses 2 a plastoquinone + 4 hnu + 2 H2O = 2 a plastoquinol + O2. Photosystem II (PSII) is a light-driven water:plastoquinone oxidoreductase that uses light energy to abstract electrons from H(2)O, generating O(2) and a proton gradient subsequently used for ATP formation. It consists of a core antenna complex that captures photons, and an electron transfer chain that converts photonic excitation into a charge separation. The D1/D2 (PsbA/PsbD) reaction center heterodimer binds P680, the primary electron donor of PSII as well as several subsequent electron acceptors. In Prochlorococcus marinus (strain MIT 9303), this protein is Photosystem II protein D1.